Reading from the N-terminus, the 548-residue chain is Chaperonin GroEL (548 aa).

Residues 29–32 (TLGP), K50, 86–90 (DGTTT), G413, 479–481 (NAA), and D496 each bind ATP.

Belongs to the chaperonin (HSP60) family. In terms of assembly, forms a cylinder of 14 subunits composed of two heptameric rings stacked back-to-back. Interacts with the co-chaperonin GroES.

It localises to the cytoplasm. It carries out the reaction ATP + H2O + a folded polypeptide = ADP + phosphate + an unfolded polypeptide.. Its function is as follows. Together with its co-chaperonin GroES, plays an essential role in assisting protein folding. The GroEL-GroES system forms a nano-cage that allows encapsulation of the non-native substrate proteins and provides a physical environment optimized to promote and accelerate protein folding. This chain is Chaperonin GroEL, found in Deinococcus radiodurans (strain ATCC 13939 / DSM 20539 / JCM 16871 / CCUG 27074 / LMG 4051 / NBRC 15346 / NCIMB 9279 / VKM B-1422 / R1).